A 1581-amino-acid polypeptide reads, in one-letter code: Ankyrin repeat domain-containing protein 26 (1581 aa).

A disordered region spans residues 1 to 22 (MKKIFGFRSKGPSPLGPSARPR). Position 13 is a phosphoserine (S13). ANK repeat units follow at residues 46-76 (KDMG…GVND), 80-109 (KDRT…EIDA), 113-142 (ESST…DPNV), 146-175 (SGNT…NIEA), and 179-208 (DDLT…SIHA). Disordered stretches follow at residues 225-270 (RLQR…FDNK), 299-343 (LDNG…PVEG), 361-381 (SASQ…WHKS), and 488-652 (VLNK…QTAA). Positions 229–250 (SENSNPVDNGSEDGSLTRSYNT) are enriched in polar residues. Phosphoserine is present on residues S239 and S260. Positions 308–319 (SDSPSESEDAIE) are enriched in acidic residues. Polar residues predominate over residues 327 to 337 (RVQTLSPSRQS). The segment covering 367 to 381 (PNHDNLTRADGWHKS) has biased composition (basic and acidic residues). The segment covering 491 to 504 (KTETVGMTDAQTFK) has biased composition (polar residues). Basic and acidic residues-rich tracts occupy residues 505–516 (SEPESVSREEQT), 524–538 (SQQK…KNNE), and 585–601 (KEAK…REPA). A Phosphoserine modification is found at S511. Coiled-coil stretches lie at residues 715–845 (RSHC…NARM), 876–1345 (HEKE…MVEH), 1396–1470 (RSQM…RSLL), and 1521–1550 (LTKM…FCRV).

As to quaternary structure, interacts with TRIO. Interacts with GPS2. Interacts with CCDC85B. Interacts with HMMR. In terms of tissue distribution, widely expressed. Expressed in the arcuate and ventromedial nuclei within the hypothalamus and in the ependyma and the circumventricular organs (at protein level).

The protein localises to the cytoplasm. It is found in the cytosol. Its function is as follows. Acts as a regulator of adipogenesis. Involved in the regulation of the feeding behavior. This is Ankyrin repeat domain-containing protein 26 (Ankrd26) from Mus musculus (Mouse).